Consider the following 503-residue polypeptide: Putative FBD-associated F-box protein At5g56410 (503 aa).

Residues 2–50 (DKITGFSDDELLVKILSFLPTKAAVTTSILSKQWKFLWMRLPKLEYHDD) form the F-box domain. Residues 361-412 (FWEQMITSVPQCLLSSLQTFKWLGNGDSIEGKDLATFILRNSCQLKTATISI) enclose the FBD domain.

This is Putative FBD-associated F-box protein At5g56410 from Arabidopsis thaliana (Mouse-ear cress).